Reading from the N-terminus, the 562-residue chain is Urocanate hydratase (562 aa).

NAD(+) is bound by residues 52–53 (GG), Gln-130, 176–178 (GMG), Glu-196, Arg-201, 242–243 (NA), 263–267 (QTSAH), 273–274 (YL), and Tyr-322. Cys-410 is a catalytic residue. Gly-492 contributes to the NAD(+) binding site.

It belongs to the urocanase family. It depends on NAD(+) as a cofactor.

The protein resides in the cytoplasm. It catalyses the reaction 4-imidazolone-5-propanoate = trans-urocanate + H2O. It functions in the pathway amino-acid degradation; L-histidine degradation into L-glutamate; N-formimidoyl-L-glutamate from L-histidine: step 2/3. In terms of biological role, catalyzes the conversion of urocanate to 4-imidazolone-5-propionate. The sequence is that of Urocanate hydratase from Klebsiella pneumoniae subsp. pneumoniae (strain ATCC 700721 / MGH 78578).